The chain runs to 377 residues: RING-H2 finger protein ATL22 (377 aa).

Residues methionine 1 to alanine 23 form the signal peptide. A helical transmembrane segment spans residues isoleucine 244 to methionine 264. Residues cysteine 327–arginine 369 form an RING-type; atypical zinc finger.

It belongs to the RING-type zinc finger family. ATL subfamily.

The protein localises to the membrane. It catalyses the reaction S-ubiquitinyl-[E2 ubiquitin-conjugating enzyme]-L-cysteine + [acceptor protein]-L-lysine = [E2 ubiquitin-conjugating enzyme]-L-cysteine + N(6)-ubiquitinyl-[acceptor protein]-L-lysine.. The protein operates within protein modification; protein ubiquitination. This is RING-H2 finger protein ATL22 (ATL22) from Arabidopsis thaliana (Mouse-ear cress).